Reading from the N-terminus, the 150-residue chain is uncharacterized protein (150 aa).

The signal sequence occupies residues 1-28; the sequence is MPLDVWIAFSYFIDFFQWLFMLNAEVMR.

This is an uncharacterized protein from Archaeoglobus fulgidus (strain ATCC 49558 / DSM 4304 / JCM 9628 / NBRC 100126 / VC-16).